The following is a 274-amino-acid chain: Diaminopimelate epimerase (274 aa).

Substrate contacts are provided by asparagine 11 and asparagine 65. Cysteine 74 functions as the Proton donor in the catalytic mechanism. Residues 75–76 (GN), asparagine 158, asparagine 191, and 209–210 (ER) each bind substrate. Residue cysteine 218 is the Proton acceptor of the active site. 219 to 220 (GT) contributes to the substrate binding site.

Belongs to the diaminopimelate epimerase family. Homodimer.

The protein localises to the cytoplasm. It carries out the reaction (2S,6S)-2,6-diaminopimelate = meso-2,6-diaminopimelate. It functions in the pathway amino-acid biosynthesis; L-lysine biosynthesis via DAP pathway; DL-2,6-diaminopimelate from LL-2,6-diaminopimelate: step 1/1. Catalyzes the stereoinversion of LL-2,6-diaminopimelate (L,L-DAP) to meso-diaminopimelate (meso-DAP), a precursor of L-lysine and an essential component of the bacterial peptidoglycan. This is Diaminopimelate epimerase from Carboxydothermus hydrogenoformans (strain ATCC BAA-161 / DSM 6008 / Z-2901).